We begin with the raw amino-acid sequence, 672 residues long: Segment polarity protein dishevelled homolog mig-5 (672 aa).

Residues 9–91 (CSQIKVFYYL…GFYEIFLVST (83 aa)) form the DIX domain. Disordered stretches follow at residues 97-127 (LPRN…ATPY), 150-174 (YTSN…SSLY), and 187-215 (DDDR…ATES). Residues 98–108 (PRNSGTMTRPQ) show a composition bias toward polar residues. The segment covering 160-169 (YDEHTRRTGD) has biased composition (basic and acidic residues). Over residues 191–202 (RRKKQKKERFRR) the composition is skewed to basic residues. In terms of domain architecture, PDZ spans 226-294 (EIYLPMKNVP…PQAVRSLREA (69 aa)). One can recognise a DEP domain in the interval 427–501 (PDSGLAVKNR…TEKCYYVFGD (75 aa)). Residues 604 to 672 (KNNHRQVPAP…SNSRTRILRT (69 aa)) form a disordered region. The segment covering 660 to 672 (ENSSNSRTRILRT) has biased composition (polar residues).

Belongs to the DSH family.

The protein resides in the cytoplasm. Its subcellular location is the cell cortex. The protein localises to the cell membrane. It is found in the cell junction. Functionally, plays a role in the signal transduction pathways mediated by multiple Wnt genes. Functions redundantly with other dishevelled family members throughout development. During embryonic and larval development, controls cell migration and/or cell fate specification of hypodermal cells, hypodermal seam cells, vulval precursor cells and, through distal tip cell migration, somatic gonad precursor cells. In early embryos, regulates the orientation of the mitotic spindle of blastomeres and specifically, along with dsh-2, is required for the correct mitotic spindle orientation of the ABar blastomere division plane. Controls the polarity and the asymmetric localization of downstream components of the wnt/beta-catenin asymmetry pathway, and in particular, controls the asymmetric localization of the wnt receptor lin-17/Frizzled in ectodermal blast B cells. May act redundantly with dsh-2 to regulate the expression and nuclear localization of the beta-catenin homolog wrm-2, but alone seems to be required for the polarity of wrm-2 during the asymmetric cell division of hypodermal seam cells. Also, maintains the polarity and migration of QL neuroblasts in larvae. During the embryonic development of touch receptor neurons, may act redundantly with dsh-1, downstream of wnt signaling ligands and the wnt receptor lin-17/Frizzled, to direct the growth of neurites of touch receptor neurons towards the anterior of the body of the worm and towards the PLM touch receptor neuron and other tail neurons. May play a role in the guidance of posterior D-type motor neuron axons along the anteroposterior axis. This Caenorhabditis elegans protein is Segment polarity protein dishevelled homolog mig-5.